We begin with the raw amino-acid sequence, 633 residues long: Replication protein E1 (633 aa).

A Nuclear localization signal motif is present at residues 84-86; it reads KRK. Ser-90, Ser-94, and Ser-108 each carry phosphoserine; by host. Residues 107 to 116 carry the Nuclear export signal motif; the sequence is LSPRLGAISL. A disordered region spans residues 148–168; it reads NTEGTDETETDQVQTVSGETT. Residues 158 to 168 show a composition bias toward polar residues; it reads DQVQTVSGETT. The tract at residues 169–335 is DNA-binding region; sequence TDSLGRQQIT…QTVIEYSLAD (167 aa). An SF3 helicase domain is found at 434-584; it reads VDFISFMIAL…FPFDSNGNPV (151 aa). ATP is bound at residue 460–467; the sequence is GPPDTGKS. Residue Lys-541 forms a Glycyl lysine isopeptide (Lys-Gly) (interchain with G-Cter in SUMO) linkage. A disordered region spans residues 609–633; sequence DNEEEENGDPSNTFRCVPGKASRPI.

Belongs to the papillomaviridae E1 protein family. As to quaternary structure, can form hexamers. Interacts with E2 protein; this interaction increases E1 DNA binding specificity. Interacts with host DNA polymerase subunit POLA2. Interacts with host single stranded DNA-binding protein RPA1. Interacts with host TOP1; this interaction stimulates the enzymatic activity of TOP1. Post-translationally, phosphorylated. In terms of processing, sumoylated.

It localises to the host nucleus. The catalysed reaction is Couples ATP hydrolysis with the unwinding of duplex DNA by translocating in the 3'-5' direction.. It catalyses the reaction ATP + H2O = ADP + phosphate + H(+). Functionally, ATP-dependent DNA 3'-5' helicase required for initiation of viral DNA replication. It forms a complex with the viral E2 protein. The E1-E2 complex binds to the replication origin which contains binding sites for both proteins. During the initial step, a dimer of E1 interacts with a dimer of protein E2 leading to a complex that binds the viral origin of replication with high specificity. Then, a second dimer of E1 displaces the E2 dimer in an ATP-dependent manner to form the E1 tetramer. Following this, two E1 monomers are added to each half of the site, which results in the formation of two E1 trimers on the viral ori. Subsequently, two hexamers will be created. The double hexamer acts as a bi-directional helicase machinery and unwinds the viral DNA and then recruits the host DNA polymerase to start replication. This Homo sapiens (Human) protein is Replication protein E1.